The chain runs to 236 residues: MSTHINAKMGDYADTVLLPGDPLRAKYIAENFLENVKQVNSVRNAFGYTGEYKGHRISVQGSGMGIPSMSIYINELVREFGVKTIIRVGSCGGIAPDVHVRDVLLAQGSSTDSAVTVNTFGPGFHYAPLADFKLLDTAYHVAGKLGIETKVGDIFAADRFYNDELDMEKLRDYGILGTEMESAGLYLLAAKLHFRALSVLTVSDLIFGDEKATAEERERTFNDMINISLETAIAGK.

A purine D-ribonucleoside is bound at residue histidine 4. Phosphate is bound by residues glycine 20, arginine 24, arginine 43, and 87–90 (RVGS). Residues 179–181 (EME) and 203–204 (SD) contribute to the a purine D-ribonucleoside site. Catalysis depends on aspartate 204, which acts as the Proton donor.

Belongs to the PNP/UDP phosphorylase family. Homohexamer; trimer of homodimers.

It catalyses the reaction a purine D-ribonucleoside + phosphate = a purine nucleobase + alpha-D-ribose 1-phosphate. The enzyme catalyses a purine 2'-deoxy-D-ribonucleoside + phosphate = a purine nucleobase + 2-deoxy-alpha-D-ribose 1-phosphate. Functionally, catalyzes the reversible phosphorolytic breakdown of the N-glycosidic bond in the beta-(deoxy)ribonucleoside molecules, with the formation of the corresponding free purine bases and pentose-1-phosphate. The protein is Purine nucleoside phosphorylase DeoD-type of Limosilactobacillus reuteri (strain DSM 20016) (Lactobacillus reuteri).